Here is a 207-residue protein sequence, read N- to C-terminus: Thymidine kinase (207 aa).

Residues 15–22 (GSMFSGKS) and 88–91 (DEVQ) each bind ATP. The Proton acceptor role is filled by glutamate 89. The Zn(2+) site is built by cysteine 145, cysteine 148, cysteine 183, and histidine 186.

Belongs to the thymidine kinase family. As to quaternary structure, homotetramer.

Its subcellular location is the cytoplasm. It catalyses the reaction thymidine + ATP = dTMP + ADP + H(+). This Oceanobacillus iheyensis (strain DSM 14371 / CIP 107618 / JCM 11309 / KCTC 3954 / HTE831) protein is Thymidine kinase.